The sequence spans 317 residues: OVARIAN TUMOR DOMAIN-containing deubiquitinating enzyme 4 (317 aa).

The OTU domain occupies 168–306 (YSIIGIPGDG…FGHYDALLLH (139 aa)). Asp-176 is a catalytic residue. The active-site Nucleophile is Cys-179. His-299 is an active-site residue.

This sequence belongs to the peptidase C65 family.

It is found in the cytoplasm. It carries out the reaction Thiol-dependent hydrolysis of ester, thioester, amide, peptide and isopeptide bonds formed by the C-terminal Gly of ubiquitin (a 76-residue protein attached to proteins as an intracellular targeting signal).. Its function is as follows. Hydrolase that can remove conjugated ubiquitin from proteins in vitro and may therefore play an important regulatory role at the level of protein turnover by preventing degradation. Cysteine protease with a preference for 'Lys-63' over 'Lys-48'-linked over 'Met-1' ubiquitin (UB) tetramers (e.g. Ub3 and Ub4) as substrates. Also cleaves RUB-GST fusion. This Arabidopsis thaliana (Mouse-ear cress) protein is OVARIAN TUMOR DOMAIN-containing deubiquitinating enzyme 4.